We begin with the raw amino-acid sequence, 190 residues long: Interferon alpha-9 (190 aa).

The first 23 residues, 1-23 (MARPFAFLMVLVVISYWSTCSLG), serve as a signal peptide directing secretion. Disulfide bonds link cysteine 24–cysteine 122 and cysteine 52–cysteine 162. A glycan (N-linked (GlcNAc...) asparagine) is linked at asparagine 101.

The protein belongs to the alpha/beta interferon family.

Its subcellular location is the secreted. Functionally, produced by macrophages, IFN-alpha have antiviral activities. Interferon stimulates the production of two enzymes: a protein kinase and an oligoadenylate synthetase. This is Interferon alpha-9 (Ifna9) from Mus musculus (Mouse).